The sequence spans 300 residues: Peptidyl-prolyl cis-trans isomerase E (300 aa).

Residues 6-84 form the RRM domain; it reads RTIYVGGLAD…RTIRVNLAKP (79 aa). Positions 142–298 constitute a PPIase cyclophilin-type domain; that stretch reads FFDIRIGGND…QKIVIYSCGE (157 aa).

The protein belongs to the cyclophilin-type PPIase family. PPIase E subfamily.

Its subcellular location is the nucleus. The enzyme catalyses [protein]-peptidylproline (omega=180) = [protein]-peptidylproline (omega=0). PPIases accelerate the folding of proteins. It catalyzes the cis-trans isomerization of proline imidic peptide bonds in oligopeptides. Combines RNA-binding and PPIase activities. The polypeptide is Peptidyl-prolyl cis-trans isomerase E (cyp33) (Drosophila melanogaster (Fruit fly)).